Here is a 900-residue protein sequence, read N- to C-terminus: Seizure protein 6 homolog (900 aa).

Positions Met1 to Gly20 are cleaved as a signal peptide. The interval Leu111–Glu130 is disordered. The segment covering Pro113 to Ser125 has biased composition (pro residues). A disulfide bridge links Cys151 with Cys178. The CUB 1 domain occupies Cys151–Phe259. N-linked (GlcNAc...) asparagine glycans are attached at residues Asn154, Asn198, and Asn220. In terms of domain architecture, Sushi 1 spans Leu261–Ala320. Cystine bridges form between Cys263–Cys303, Cys289–Cys318, Cys322–Cys353, Cys441–Cys483, Cys468–Cys498, and Cys502–Cys528. Residues Asn305, Asn328, Asn350, Asn450, and Asn492 are each glycosylated (N-linked (GlcNAc...) asparagine). Residues Cys322 to Phe436 form the CUB 2 domain. Residues Ser439–Ala500 enclose the Sushi 2 domain. The CUB 3 domain maps to Cys502 to Val613. Asn616 is a glycosylation site (N-linked (GlcNAc...) asparagine). 3 Sushi domains span residues Asp617 to Lys676, Leu678 to Leu741, and Glu744 to Val805. 6 cysteine pairs are disulfide-bonded: Cys619–Cys661, Cys647–Cys674, Cys680–Cys722, Cys708–Cys739, Cys746–Cys788, and Cys774–Cys803. Residues Ile833–Ile853 form a helical membrane-spanning segment.

This sequence belongs to the SEZ6 family.

Its subcellular location is the cell membrane. May play a role in cell-cell recognition and in neuronal membrane signaling. This is Seizure protein 6 homolog (sez6) from Xenopus laevis (African clawed frog).